Consider the following 642-residue polypeptide: Chaperone protein DnaK (642 aa).

A Phosphothreonine; by autocatalysis modification is found at Thr200. Positions 608–618 (QAESQAAGEGQ) are enriched in low complexity. A disordered region spans residues 608–642 (QAESQAAGEGQPDAGKKDDGNVVDAEFEEVKKDKQ).

It belongs to the heat shock protein 70 family.

In terms of biological role, acts as a chaperone. The polypeptide is Chaperone protein DnaK (Laribacter hongkongensis (strain HLHK9)).